The sequence spans 1114 residues: MSASTETHHASEAAVPTAPRPRPALGSKSGRLHQVPHIAGLILGVFSVLVFLWSISPVLRYYVHVPREYIDTYYFDAPDTSLSWALVVALLAAALASRKRIAWWLLTIYLVLILITNVIVSITDRNVNAMVAAVVQVVLIGILVAARPEFYTRVRRGAGWKALGVLIVGLAIGTLVGWGLVELFPGTLPQGERFLWALNRVTALAAADNEQFSGRPHGFVNTLLGLFGAMALLAAVITLFRAQRSHNALTGNDESALRGLLLQYGADDSLGYFATRRDKAVVFAPSGKAAITYRVELGVCLASGDPIGDPEAWPHAIEAWQTLASQYGWATAVMGASETGATAYNKAGLTVLQLGDEAILRTREFNLSGRDMRQVRQAVTRVRRQGVTVRIRRHRDVPPEEMAEAIRLADAWRDTETERGFSMALGRLGDRLDGDCLLVEAIAEDGEIDGILSLVPWGPTGVSLDLMRRKPTSPNGVVELMVSELATTSDQFGITKVSLNFAVFRSVFEEGSRIGAGPILRIWRSILVFFSRWWQLEALYRSNVKYQPEWVPRFLCFDDNRELLRVGFASAVAEGFVTLPRFGRSGTHDAIEHTGHHAAVPAALVAAEGLHSDGSAPGEGLAPTATGPKRPEQVRVRLDKLTGLAEQGIDPYPVAYPPSHTVTEAVESPEGTTVRIAGRLLRIRDYGGVVFAVVRDWSGDIQVLVDEARVGTDRIRAFAAEFDLGDLVEVAGVIGYSRRGALSLLANEWRMTGKCLHPLPDKWKGLSDPETRVRQRYVDLAINTDARRLLEARSAVVKSLRDSLGGRGFLEVETPILQQVHGGANAAPFLTHINAYNLDLYLRIAPELYLKRLCVAGMEKVFEIGRVFRNEGVDFKHNPEFTILEAYEAHSDYEKMMVLCRELIQTAAVAAYGREIIMRPGPDGTLVEVDISGEWPVKTMHQAVAEKLGVDVSPETPLAELQRLCDEHEIPYQSTWDAGAVAQEMYEHLVEDYTEFPTFYTNFPTSMSPLTRPHPTIPGVAAKWDLVAWGVELGTAYSELTDPVDQRNRLTEQSMLAAGGDEEAMELDEDFLQALEHAMPPTGGLGMGVDRVVMLITGGSIRETLAFPLAKPRQ.

Positions 1 to 11 are enriched in basic and acidic residues; it reads MSASTETHHAS. The interval 1–28 is disordered; it reads MSASTETHHASEAAVPTAPRPRPALGSK. Residues 1–618 are phosphatidylglycerol lysyltransferase; it reads MSASTETHHA…GLHSDGSAPG (618 aa). 6 consecutive transmembrane segments (helical) span residues 38 to 58, 77 to 97, 101 to 121, 126 to 146, 164 to 184, and 219 to 239; these read IAGL…ISPV, APDT…ALAS, IAWW…VIVS, NVNA…LVAA, GVLI…VELF, and FVNT…VITL. The segment at 619–1114 is lysine--tRNA ligase; the sequence is EGLAPTATGP…LAFPLAKPRQ (496 aa). The OB DNA-binding region spans 674–751; the sequence is VRIAGRLLRI…LSLLANEWRM (78 aa). Positions 1025 and 1032 each coordinate Mg(2+).

It in the N-terminal section; belongs to the LPG synthetase family. This sequence in the C-terminal section; belongs to the class-II aminoacyl-tRNA synthetase family. Requires Mg(2+) as cofactor.

Its subcellular location is the cell membrane. It carries out the reaction tRNA(Lys) + L-lysine + ATP = L-lysyl-tRNA(Lys) + AMP + diphosphate. It catalyses the reaction L-lysyl-tRNA(Lys) + a 1,2-diacyl-sn-glycero-3-phospho-(1'-sn-glycerol) = a 1,2-diacyl-sn-glycero-3-phospho-1'-(3'-O-L-lysyl)-sn-glycerol + tRNA(Lys). In terms of biological role, catalyzes the production of L-lysyl-tRNA(Lys)transfer and the transfer of a lysyl group from L-lysyl-tRNA(Lys) to membrane-bound phosphatidylglycerol (PG), which produces lysylphosphatidylglycerol (LPG), one of the components of the bacterial membrane with a positive net charge. LPG synthesis contributes to the resistance to cationic antimicrobial peptides (CAMPs) and likely protects M.tuberculosis against the CAMPs produced by competiting microorganisms (bacteriocins). In fact, the modification of anionic phosphatidylglycerol with positively charged L-lysine results in repulsion of the peptides. The protein is Lysylphosphatidylglycerol biosynthesis bifunctional protein LysX (lysX) of Rhodococcus opacus (strain B4).